The following is a 446-amino-acid chain: Beta-glucosidase A (446 aa).

E166 serves as the catalytic Proton donor. The active-site Nucleophile is the E351.

This sequence belongs to the glycosyl hydrolase 1 family.

The catalysed reaction is Hydrolysis of terminal, non-reducing beta-D-glucosyl residues with release of beta-D-glucose.. It functions in the pathway glycan metabolism; cellulose degradation. The sequence is that of Beta-glucosidase A (bglA) from Thermotoga maritima (strain ATCC 43589 / DSM 3109 / JCM 10099 / NBRC 100826 / MSB8).